Consider the following 1517-residue polypeptide: uncharacterized protein (1517 aa).

Polar residues predominate over residues 1–13 (MNQFPNQPGNFGQ). Residues 1–26 (MNQFPNQPGNFGQNYYKPVQGSIPAN) are disordered. N-linked (GlcNAc...) asparagine glycosylation is found at asparagine 35, asparagine 40, and asparagine 76. A run of 5 helical transmembrane segments spans residues 231 to 251 (AIDF…AVPI), 397 to 417 (AIGL…TVWC), 510 to 530 (FVPL…KDWI), 612 to 632 (PNIV…FFAL), and 720 to 740 (VFDC…VVLL). An N-linked (GlcNAc...) asparagine glycan is attached at asparagine 917. Transmembrane regions (helical) follow at residues 956 to 976 (FVYA…VPPL), 985 to 1005 (VPAF…VNSE), 1051 to 1071 (VKLD…AFWS), and 1114 to 1134 (GIGF…TYLL). N-linked (GlcNAc...) asparagine glycosylation is present at asparagine 1178. The chain crosses the membrane as a helical span at residues 1261–1281 (PYALPLLDSGMVPVSTQLAIV). The N-linked (GlcNAc...) asparagine glycan is linked to asparagine 1321. 2 consecutive transmembrane segments (helical) span residues 1353–1373 (APVV…TFEV) and 1408–1428 (VVVV…PVVI).

It to S.pombe SpAC22F3.04.

It is found in the membrane. This is an uncharacterized protein from Schizosaccharomyces pombe (strain 972 / ATCC 24843) (Fission yeast).